The sequence spans 434 residues: Glutamate-1-semialdehyde 2,1-aminomutase (434 aa).

An N6-(pyridoxal phosphate)lysine modification is found at K274.

It belongs to the class-III pyridoxal-phosphate-dependent aminotransferase family. HemL subfamily. In terms of assembly, homodimer. Pyridoxal 5'-phosphate serves as cofactor.

Its subcellular location is the cytoplasm. The catalysed reaction is (S)-4-amino-5-oxopentanoate = 5-aminolevulinate. It participates in porphyrin-containing compound metabolism; protoporphyrin-IX biosynthesis; 5-aminolevulinate from L-glutamyl-tRNA(Glu): step 2/2. This Acidovorax ebreus (strain TPSY) (Diaphorobacter sp. (strain TPSY)) protein is Glutamate-1-semialdehyde 2,1-aminomutase.